The sequence spans 65 residues: Toxin Co52 (65 aa).

One can recognise an LCN-type CS-alpha/beta domain in the interval E2–C65. Cystine bridges form between C12–C65, C16–C41, C25–C46, and C29–C48.

As to expression, expressed by the venom gland.

It is found in the secreted. In terms of biological role, beta toxins bind voltage-independently at site-4 of sodium channels (Nav) and shift the voltage of activation toward more negative potentials thereby affecting sodium channel activation and promoting spontaneous and repetitive firing. Not toxic to mice, chicks, crickets or woodlice (at 5 ug). This Centruroides ornatus (Scorpion) protein is Toxin Co52.